The sequence spans 86 residues: Small ribosomal subunit protein bS18 (86 aa).

The protein belongs to the bacterial ribosomal protein bS18 family. In terms of assembly, part of the 30S ribosomal subunit. Forms a tight heterodimer with protein bS6.

Its function is as follows. Binds as a heterodimer with protein bS6 to the central domain of the 16S rRNA, where it helps stabilize the platform of the 30S subunit. The polypeptide is Small ribosomal subunit protein bS18 (Heliobacterium modesticaldum (strain ATCC 51547 / Ice1)).